The primary structure comprises 878 residues: Aminopeptidase M1-A (878 aa).

The required for membrane association stretch occupies residues 105 to 212; that stretch reads VGEGTLVIAF…MSTYLVAVIV (108 aa). Residues glutamate 145 and 278 to 282 each bind substrate; that span reads GAMEN. Histidine 314 contributes to the Zn(2+) binding site. Glutamate 315 functions as the Proton acceptor in the catalytic mechanism. Residues histidine 318 and glutamate 337 each contribute to the Zn(2+) site. Residues 727–728 carry the Dileucine internalization motif motif; that stretch reads LL.

This sequence belongs to the peptidase M1 family. As to quaternary structure, homodimer. Requires Zn(2+) as cofactor.

The protein resides in the membrane. It localises to the microsome membrane. It is found in the cytoplasm. It catalyses the reaction Release of an N-terminal amino acid, Xaa-|-Yaa- from a peptide, amide or arylamide. Xaa is preferably Ala, but may be most amino acids including Pro (slow action). When a terminal hydrophobic residue is followed by a prolyl residue, the two may be released as an intact Xaa-Pro dipeptide.. This Oryza sativa subsp. japonica (Rice) protein is Aminopeptidase M1-A.